A 288-amino-acid chain; its full sequence is Undecaprenyl-diphosphatase (288 aa).

The next 8 membrane-spanning stretches (helical) occupy residues 11–31 (LDLW…FLPI), 49–69 (PGVA…LSYF), 94–114 (AQMG…GLLI), 129–149 (LAAI…AEQL), 159–179 (LRLA…IPGV), 199–219 (AARF…LVEL), 234–254 (VLAI…AWLL), and 265–285 (FVVY…TGTL).

The protein belongs to the UppP family.

The protein localises to the cell inner membrane. The enzyme catalyses di-trans,octa-cis-undecaprenyl diphosphate + H2O = di-trans,octa-cis-undecaprenyl phosphate + phosphate + H(+). In terms of biological role, catalyzes the dephosphorylation of undecaprenyl diphosphate (UPP). Confers resistance to bacitracin. This is Undecaprenyl-diphosphatase from Synechococcus elongatus (strain ATCC 33912 / PCC 7942 / FACHB-805) (Anacystis nidulans R2).